We begin with the raw amino-acid sequence, 466 residues long: Asparagine--tRNA ligase (466 aa).

This sequence belongs to the class-II aminoacyl-tRNA synthetase family. In terms of assembly, homodimer.

The protein resides in the cytoplasm. The enzyme catalyses tRNA(Asn) + L-asparagine + ATP = L-asparaginyl-tRNA(Asn) + AMP + diphosphate + H(+). In Salmonella paratyphi A (strain ATCC 9150 / SARB42), this protein is Asparagine--tRNA ligase.